Consider the following 383-residue polypeptide: Succinyl-diaminopimelate desuccinylase (383 aa).

Residue His68 coordinates Zn(2+). The active site involves Asp70. Position 100 (Asp100) interacts with Zn(2+). Glu130 acts as the Proton acceptor in catalysis. Zn(2+) is bound by residues Glu131, Glu159, and His352.

This sequence belongs to the peptidase M20A family. DapE subfamily. In terms of assembly, homodimer. Zn(2+) serves as cofactor. Co(2+) is required as a cofactor.

The catalysed reaction is N-succinyl-(2S,6S)-2,6-diaminopimelate + H2O = (2S,6S)-2,6-diaminopimelate + succinate. Its pathway is amino-acid biosynthesis; L-lysine biosynthesis via DAP pathway; LL-2,6-diaminopimelate from (S)-tetrahydrodipicolinate (succinylase route): step 3/3. Functionally, catalyzes the hydrolysis of N-succinyl-L,L-diaminopimelic acid (SDAP), forming succinate and LL-2,6-diaminopimelate (DAP), an intermediate involved in the bacterial biosynthesis of lysine and meso-diaminopimelic acid, an essential component of bacterial cell walls. This is Succinyl-diaminopimelate desuccinylase from Granulibacter bethesdensis (strain ATCC BAA-1260 / CGDNIH1).